Consider the following 430-residue polypeptide: Adenylosuccinate synthetase (430 aa).

GTP contacts are provided by residues 13–19 (GDEGKGK) and 41–43 (GHT). Aspartate 14 functions as the Proton acceptor in the catalytic mechanism. Aspartate 14 and glycine 41 together coordinate Mg(2+). Residues 14 to 17 (DEGK), 39 to 42 (NAGH), threonine 130, arginine 144, glutamine 225, threonine 240, and arginine 304 contribute to the IMP site. Histidine 42 serves as the catalytic Proton donor. 300–306 (ATTGRAR) contributes to the substrate binding site. GTP-binding positions include arginine 306, 332-334 (KLD), and 414-416 (STG).

The protein belongs to the adenylosuccinate synthetase family. As to quaternary structure, homodimer. Mg(2+) serves as cofactor.

It localises to the cytoplasm. The enzyme catalyses IMP + L-aspartate + GTP = N(6)-(1,2-dicarboxyethyl)-AMP + GDP + phosphate + 2 H(+). Its pathway is purine metabolism; AMP biosynthesis via de novo pathway; AMP from IMP: step 1/2. Plays an important role in the de novo pathway of purine nucleotide biosynthesis. Catalyzes the first committed step in the biosynthesis of AMP from IMP. The polypeptide is Adenylosuccinate synthetase (Pseudomonas syringae pv. tomato (strain ATCC BAA-871 / DC3000)).